The primary structure comprises 156 residues: Small ribosomal subunit protein uS7 (156 aa).

This sequence belongs to the universal ribosomal protein uS7 family. In terms of assembly, part of the 30S ribosomal subunit. Contacts proteins S9 and S11.

Functionally, one of the primary rRNA binding proteins, it binds directly to 16S rRNA where it nucleates assembly of the head domain of the 30S subunit. Is located at the subunit interface close to the decoding center, probably blocks exit of the E-site tRNA. This chain is Small ribosomal subunit protein uS7, found in Vibrio vulnificus (strain CMCP6).